A 916-amino-acid polypeptide reads, in one-letter code: Protein translocase subunit SecA (916 aa).

ATP-binding positions include Gln-87, 105–109 (GEGKT), and Asp-507. Residues Cys-900, Cys-902, Cys-911, and His-912 each coordinate Zn(2+).

Belongs to the SecA family. Monomer and homodimer. Part of the essential Sec protein translocation apparatus which comprises SecA, SecYEG and auxiliary proteins SecDF-YajC and YidC. Zn(2+) is required as a cofactor.

It is found in the cell inner membrane. Its subcellular location is the cytoplasm. The enzyme catalyses ATP + H2O + cellular proteinSide 1 = ADP + phosphate + cellular proteinSide 2.. Its function is as follows. Part of the Sec protein translocase complex. Interacts with the SecYEG preprotein conducting channel. Has a central role in coupling the hydrolysis of ATP to the transfer of proteins into and across the cell membrane, serving both as a receptor for the preprotein-SecB complex and as an ATP-driven molecular motor driving the stepwise translocation of polypeptide chains across the membrane. This chain is Protein translocase subunit SecA, found in Neisseria meningitidis serogroup C / serotype 2a (strain ATCC 700532 / DSM 15464 / FAM18).